The following is a 459-amino-acid chain: Cysteine--tRNA ligase (459 aa).

Cysteine 27 contributes to the Zn(2+) binding site. Residues 29-39 carry the 'HIGH' region motif; it reads PTVYNFVHIGN. Cysteine 211, histidine 236, and glutamate 240 together coordinate Zn(2+). Positions 269–273 match the 'KMSKS' region motif; the sequence is KMSKS. Lysine 272 contributes to the ATP binding site.

Belongs to the class-I aminoacyl-tRNA synthetase family. Monomer. It depends on Zn(2+) as a cofactor.

The protein localises to the cytoplasm. It carries out the reaction tRNA(Cys) + L-cysteine + ATP = L-cysteinyl-tRNA(Cys) + AMP + diphosphate. The protein is Cysteine--tRNA ligase of Ehrlichia canis (strain Jake).